The chain runs to 205 residues: Molybdenum cofactor guanylyltransferase (205 aa).

GTP-binding positions include 14–16, lysine 27, aspartate 77, and aspartate 107; that span reads LAG. Mg(2+) is bound at residue aspartate 107.

The protein belongs to the MobA family. Monomer. Mg(2+) is required as a cofactor.

Its subcellular location is the cytoplasm. It catalyses the reaction Mo-molybdopterin + GTP + H(+) = Mo-molybdopterin guanine dinucleotide + diphosphate. Its function is as follows. Transfers a GMP moiety from GTP to Mo-molybdopterin (Mo-MPT) cofactor (Moco or molybdenum cofactor) to form Mo-molybdopterin guanine dinucleotide (Mo-MGD) cofactor. This is Molybdenum cofactor guanylyltransferase from Burkholderia orbicola (strain MC0-3).